The following is a 360-amino-acid chain: Phospho-N-acetylmuramoyl-pentapeptide-transferase (360 aa).

The next 10 helical transmembrane spans lie at 27 to 47 (ILSVLTALFIAFWVGPIMIRM), 73 to 93 (TMGGALILVAIVISTLLWGDL), 97 to 117 (FVWITLGVLFVFGAVGWVDDW), 132 to 152 (WKYLWLSVGALGAGCALFFTA), 164 to 184 (FFKSVAINMGWFYIVLTYFVI), 199 to 219 (GLAIMPTVLVGGALGIFAYAG), 236 to 256 (AGELVIISAALCGAGLGFLWF), 263 to 283 (VFMGDVGALSLGAVLGVMAVI), 288 to 308 (IVLFIMGGVFVMETVSVMLQV), and 337 to 357 (KIIVRFWIITVILVLVGLATL).

The protein belongs to the glycosyltransferase 4 family. MraY subfamily. It depends on Mg(2+) as a cofactor.

Its subcellular location is the cell inner membrane. The enzyme catalyses UDP-N-acetyl-alpha-D-muramoyl-L-alanyl-gamma-D-glutamyl-meso-2,6-diaminopimeloyl-D-alanyl-D-alanine + di-trans,octa-cis-undecaprenyl phosphate = di-trans,octa-cis-undecaprenyl diphospho-N-acetyl-alpha-D-muramoyl-L-alanyl-D-glutamyl-meso-2,6-diaminopimeloyl-D-alanyl-D-alanine + UMP. The protein operates within cell wall biogenesis; peptidoglycan biosynthesis. Its function is as follows. Catalyzes the initial step of the lipid cycle reactions in the biosynthesis of the cell wall peptidoglycan: transfers peptidoglycan precursor phospho-MurNAc-pentapeptide from UDP-MurNAc-pentapeptide onto the lipid carrier undecaprenyl phosphate, yielding undecaprenyl-pyrophosphoryl-MurNAc-pentapeptide, known as lipid I. The protein is Phospho-N-acetylmuramoyl-pentapeptide-transferase of Alcanivorax borkumensis (strain ATCC 700651 / DSM 11573 / NCIMB 13689 / SK2).